The following is a 205-amino-acid chain: Auxin-responsive protein IAA8 (205 aa).

The tract at residues 1–48 (MECMASTEESLPASSSMDSCSGELPTTTTTAPAQSTASSGCRPPATAA) is disordered. Polar residues predominate over residues 7–19 (TEESLPASSSMDS). Residues 25 to 39 (PTTTTTAPAQSTASS) show a composition bias toward low complexity. The EAR-like (transcriptional repression) motif lies at 58-62 (LRLGL). Positions 71-98 (DGNNPSTPRSSLTTATVTADRGGGGGGH) are disordered. Positions 73-87 (NNPSTPRSSLTTATV) are enriched in polar residues. A PB1 domain is found at 103–199 (SLFVKVYMEG…KRLRIARADD (97 aa)).

It belongs to the Aux/IAA family. Homodimers and heterodimers. As to expression, highly expressed in green shoots. Expressed in flowers.

The protein resides in the nucleus. Its function is as follows. Aux/IAA proteins are short-lived transcriptional factors that function as repressors of early auxin response genes at low auxin concentrations. The chain is Auxin-responsive protein IAA8 (IAA8) from Oryza sativa subsp. japonica (Rice).